The chain runs to 495 residues: Trigger factor (495 aa).

In terms of domain architecture, PPIase FKBP-type spans 162-243 (DDFVSIDLSA…VKSLKERELP (82 aa)). Basic and acidic residues predominate over residues 425 to 437 (DTDGNEIDPKEYF). Residues 425–495 (DTDGNEIDPK…TDDDSENAEK (71 aa)) form a disordered region. The segment covering 450–461 (SADAEASENSEA) has biased composition (low complexity). The span at 486–495 (TDDDSENAEK) shows a compositional bias: acidic residues.

It belongs to the FKBP-type PPIase family. Tig subfamily.

The protein resides in the cytoplasm. The catalysed reaction is [protein]-peptidylproline (omega=180) = [protein]-peptidylproline (omega=0). In terms of biological role, involved in protein export. Acts as a chaperone by maintaining the newly synthesized protein in an open conformation. Functions as a peptidyl-prolyl cis-trans isomerase. This is Trigger factor from Corynebacterium kroppenstedtii (strain DSM 44385 / JCM 11950 / CIP 105744 / CCUG 35717).